We begin with the raw amino-acid sequence, 416 residues long: Adenylosuccinate synthetase (416 aa).

GTP-binding positions include 13–19 and 41–43; these read GDEGKGK and GHT. The Proton acceptor role is filled by Asp14. 2 residues coordinate Mg(2+): Asp14 and Gly41. Residues 14 to 17, 39 to 42, Thr126, Arg140, Gln220, Thr235, and Arg299 each bind IMP; these read DEGK and NAGH. Catalysis depends on His42, which acts as the Proton donor. Substrate is bound at residue 295–301; that stretch reads VSTGRKR. GTP is bound by residues Arg301, 327 to 329, and 405 to 407; these read KLD and STS.

The protein belongs to the adenylosuccinate synthetase family. In terms of assembly, homodimer. Mg(2+) serves as cofactor.

Its subcellular location is the cytoplasm. It carries out the reaction IMP + L-aspartate + GTP = N(6)-(1,2-dicarboxyethyl)-AMP + GDP + phosphate + 2 H(+). It participates in purine metabolism; AMP biosynthesis via de novo pathway; AMP from IMP: step 1/2. Functionally, plays an important role in the de novo pathway of purine nucleotide biosynthesis. Catalyzes the first committed step in the biosynthesis of AMP from IMP. The polypeptide is Adenylosuccinate synthetase (Campylobacter lari (strain RM2100 / D67 / ATCC BAA-1060)).